The sequence spans 168 residues: Probable chemoreceptor glutamine deamidase CheD 2 (168 aa).

It belongs to the CheD family.

The catalysed reaction is L-glutaminyl-[protein] + H2O = L-glutamyl-[protein] + NH4(+). In terms of biological role, probably deamidates glutamine residues to glutamate on methyl-accepting chemotaxis receptors (MCPs), playing an important role in chemotaxis. This is Probable chemoreceptor glutamine deamidase CheD 2 from Leptospira interrogans serogroup Icterohaemorrhagiae serovar copenhageni (strain Fiocruz L1-130).